Consider the following 369-residue polypeptide: Ribonuclease D (369 aa).

The 165-residue stretch at Glu4 to Glu168 folds into the 3'-5' exonuclease domain. The HRDC domain maps to Asp207–Thr286.

Belongs to the RNase D family. The cofactor is a divalent metal cation.

It localises to the cytoplasm. It carries out the reaction Exonucleolytic cleavage that removes extra residues from the 3'-terminus of tRNA to produce 5'-mononucleotides.. Functionally, exonuclease involved in the 3' processing of various precursor tRNAs. Initiates hydrolysis at the 3'-terminus of an RNA molecule and releases 5'-mononucleotides. In Psychromonas ingrahamii (strain DSM 17664 / CCUG 51855 / 37), this protein is Ribonuclease D.